Reading from the N-terminus, the 398-residue chain is Putative F-box protein At1g67450 (398 aa).

Positions 2–56 (TMMMSDLPNDLVEEILSRVPITSLGAVRSTCKRWNGLSKDRIVCKGDANQQFTGF) constitute an F-box domain.

The sequence is that of Putative F-box protein At1g67450 from Arabidopsis thaliana (Mouse-ear cress).